A 673-amino-acid polypeptide reads, in one-letter code: B3 domain-containing protein Os01g0905400 (673 aa).

Positions 1–34 are enriched in basic and acidic residues; sequence MVELIKVPKIEQEEGNADSHGKEKADVVHEEKTE. The tract at residues 1 to 44 is disordered; it reads MVELIKVPKIEQEEGNADSHGKEKADVVHEEKTEKVKRRRKRVS. A DNA-binding region (TF-B3 1) is located at residues 79-172; the sequence is LPSFFKIMVG…VFTVQIFAIS (94 aa). A disordered region spans residues 315 to 337; the sequence is PSFSYPESSNVMTADKESERSHQ. Basic and acidic residues predominate over residues 328 to 337; the sequence is ADKESERSHQ. Positions 576–671 form a DNA-binding region, TF-B3 2; it reads SKKFCITIPP…ELSFQVLVPN (96 aa).

The protein resides in the nucleus. In Oryza sativa subsp. japonica (Rice), this protein is B3 domain-containing protein Os01g0905400.